We begin with the raw amino-acid sequence, 567 residues long: Interferon lambda receptor 1 (567 aa).

The signal sequence occupies residues 1 to 22 (MSAWRIRVLATLCFLWQPRVHG). Residues 23–229 (QLPPPQNVTL…YEGEWKFPFS (207 aa)) lie on the Extracellular side of the membrane. Residues 26 to 121 (PPQNVTLLSK…KSQFKEYHLD (96 aa)) enclose the Fibronectin type-III domain. A glycan (N-linked (GlcNAc...) asparagine) is linked at asparagine 29. 3 cysteine pairs are disulfide-bonded: cysteine 74–cysteine 82, cysteine 86–cysteine 149, and cysteine 193–cysteine 215. N-linked (GlcNAc...) asparagine glycosylation is present at asparagine 141. The chain crosses the membrane as a helical span at residues 230–250 (ATIPVFVLLILLTSASIIWLL). Topologically, residues 251–567 (KQDAKHKKMP…YQHSHYMRRS (317 aa)) are cytoplasmic.

This sequence belongs to the type II cytokine receptor family. Heterodimer with IL10RB.

It localises to the membrane. Its function is as follows. The IFNLR1/IL10RB dimer is a receptor for the cytokine ligands IFNL2 and IFNL3 and mediates their antiviral activity. The ligand/receptor complex stimulate the activation of the JAK/STAT signaling pathway leading to the expression of IFN-stimulated genes (ISG), which contribute to the antiviral state. Determines the cell type specificity of the lambda interferon action. Shows a more restricted pattern of expression in the epithelial tissues thereby limiting responses to lambda interferons primarily to epithelial cells of the respiratory, gastrointestinal, and reproductive tracts. This Gallus gallus (Chicken) protein is Interferon lambda receptor 1 (IFNLR1).